A 124-amino-acid polypeptide reads, in one-letter code: MEKYLVIAVGGSIGAILRYLTGVYSAKFFGTWLPYGTLIVNVVGSFILSFFMILFLEKLSLDPLWRLFVAVGFCGSYTTLSSITYETLSIVMDGDYVRALLNIALNFGLSFLSAFAGIVLARML.

4 helical membrane passes run 4–24 (YLVI…TGVY), 36–56 (GTLI…ILFL), 63–83 (PLWR…LSSI), and 100–120 (LLNI…GIVL). 2 residues coordinate Na(+): glycine 75 and threonine 78.

It belongs to the fluoride channel Fluc/FEX (TC 1.A.43) family.

It localises to the cell inner membrane. It catalyses the reaction fluoride(in) = fluoride(out). With respect to regulation, na(+) is not transported, but it plays an essential structural role and its presence is essential for fluoride channel function. Its function is as follows. Fluoride-specific ion channel. Important for reducing fluoride concentration in the cell, thus reducing its toxicity. In Sulfurihydrogenibium sp. (strain YO3AOP1), this protein is Fluoride-specific ion channel FluC.